The primary structure comprises 404 residues: Ubiquitin-like modifier-activating enzyme 5 (404 aa).

Positions 83, 104, 127, 150, and 184 each coordinate ATP. Residues cysteine 226 and cysteine 229 each coordinate Zn(2+). Cysteine 250 acts as the Glycyl thioester intermediate in catalysis. Zn(2+)-binding residues include cysteine 303 and cysteine 308. The disordered stretch occupies residues 372 to 404 (APEKSSETSEETVSAATADETSLEDLMAQMKSM). The segment covering 382-391 (ETVSAATADE) has biased composition (low complexity).

It belongs to the ubiquitin-activating E1 family. UBA5 subfamily. As to quaternary structure, interacts (via C-terminus) with Ufc1. Interacts with Ufm1.

The protein localises to the cytoplasm. The protein resides in the nucleus. It is found in the golgi apparatus. Its function is as follows. E1-like enzyme which activates UFM1. This is Ubiquitin-like modifier-activating enzyme 5 from Drosophila melanogaster (Fruit fly).